A 137-amino-acid chain; its full sequence is uncharacterized protein (137 aa).

Belongs to the ycf72 family.

The protein localises to the plastid. The protein resides in the chloroplast. This is an uncharacterized protein from Oryza nivara (Indian wild rice).